A 375-amino-acid polypeptide reads, in one-letter code: Dual-specificity RNA methyltransferase RlmN (375 aa).

Catalysis depends on Glu-94, which acts as the Proton acceptor. The Radical SAM core domain maps to 100–339; that stretch reads EEDRATLCVS…VTVRKTRGDD (240 aa). Cysteines 107 and 344 form a disulfide. Cys-114, Cys-118, and Cys-121 together coordinate [4Fe-4S] cluster. S-adenosyl-L-methionine-binding positions include 168 to 169, Ser-200, 222 to 224, and Asn-301; these read GE and SLH. Catalysis depends on Cys-344, which acts as the S-methylcysteine intermediate.

The protein belongs to the radical SAM superfamily. RlmN family. [4Fe-4S] cluster serves as cofactor.

It localises to the cytoplasm. It catalyses the reaction adenosine(2503) in 23S rRNA + 2 reduced [2Fe-2S]-[ferredoxin] + 2 S-adenosyl-L-methionine = 2-methyladenosine(2503) in 23S rRNA + 5'-deoxyadenosine + L-methionine + 2 oxidized [2Fe-2S]-[ferredoxin] + S-adenosyl-L-homocysteine. It carries out the reaction adenosine(37) in tRNA + 2 reduced [2Fe-2S]-[ferredoxin] + 2 S-adenosyl-L-methionine = 2-methyladenosine(37) in tRNA + 5'-deoxyadenosine + L-methionine + 2 oxidized [2Fe-2S]-[ferredoxin] + S-adenosyl-L-homocysteine. Its function is as follows. Specifically methylates position 2 of adenine 2503 in 23S rRNA and position 2 of adenine 37 in tRNAs. m2A2503 modification seems to play a crucial role in the proofreading step occurring at the peptidyl transferase center and thus would serve to optimize ribosomal fidelity. The protein is Dual-specificity RNA methyltransferase RlmN of Vibrio parahaemolyticus serotype O3:K6 (strain RIMD 2210633).